The primary structure comprises 73 residues: Translation initiation factor IF-1 1 (73 aa).

The S1-like domain maps to 1–72 (MAKEELIEFG…TKGRINFRHK (72 aa)).

It belongs to the IF-1 family. As to quaternary structure, component of the 30S ribosomal translation pre-initiation complex which assembles on the 30S ribosome in the order IF-2 and IF-3, IF-1 and N-formylmethionyl-tRNA(fMet); mRNA recruitment can occur at any time during PIC assembly.

The protein resides in the cytoplasm. Functionally, one of the essential components for the initiation of protein synthesis. Stabilizes the binding of IF-2 and IF-3 on the 30S subunit to which N-formylmethionyl-tRNA(fMet) subsequently binds. Helps modulate mRNA selection, yielding the 30S pre-initiation complex (PIC). Upon addition of the 50S ribosomal subunit IF-1, IF-2 and IF-3 are released leaving the mature 70S translation initiation complex. The protein is Translation initiation factor IF-1 1 of Cupriavidus pinatubonensis (strain JMP 134 / LMG 1197) (Cupriavidus necator (strain JMP 134)).